A 147-amino-acid polypeptide reads, in one-letter code: Transcriptional regulator MraZ (147 aa).

2 SpoVT-AbrB domains span residues N5–E52 and G81–H124.

The protein belongs to the MraZ family. As to quaternary structure, forms oligomers.

Its subcellular location is the cytoplasm. The protein localises to the nucleoid. The chain is Transcriptional regulator MraZ from Koribacter versatilis (strain Ellin345).